The primary structure comprises 364 residues: 3-isopropylmalate dehydrogenase (364 aa).

79 to 92 (GPKWEHLPAAEQPE) serves as a coordination point for NAD(+). Residues arginine 100, arginine 110, arginine 139, and aspartate 228 each coordinate substrate. Positions 228, 252, and 256 each coordinate Mg(2+). Position 286–298 (286–298 (GSAPDIAGKDIAN)) interacts with NAD(+).

This sequence belongs to the isocitrate and isopropylmalate dehydrogenases family. LeuB type 1 subfamily. As to quaternary structure, homodimer. Mg(2+) is required as a cofactor. The cofactor is Mn(2+).

The protein resides in the cytoplasm. The enzyme catalyses (2R,3S)-3-isopropylmalate + NAD(+) = 4-methyl-2-oxopentanoate + CO2 + NADH. Its pathway is amino-acid biosynthesis; L-leucine biosynthesis; L-leucine from 3-methyl-2-oxobutanoate: step 3/4. Its function is as follows. Catalyzes the oxidation of 3-carboxy-2-hydroxy-4-methylpentanoate (3-isopropylmalate) to 3-carboxy-4-methyl-2-oxopentanoate. The product decarboxylates to 4-methyl-2 oxopentanoate. The protein is 3-isopropylmalate dehydrogenase of Sodalis glossinidius (strain morsitans).